The chain runs to 53 residues: UPF0391 membrane protein BP1737 (53 aa).

Helical transmembrane passes span 5 to 25 (AVVF…GIAA) and 30 to 50 (IAKI…LGGV).

The protein belongs to the UPF0391 family.

It localises to the cell membrane. The polypeptide is UPF0391 membrane protein BP1737 (Bordetella pertussis (strain Tohama I / ATCC BAA-589 / NCTC 13251)).